We begin with the raw amino-acid sequence, 176 residues long: Peptide methionine sulfoxide reductase MsrA (176 aa).

Cys-14 is an active-site residue.

It belongs to the MsrA Met sulfoxide reductase family.

It catalyses the reaction L-methionyl-[protein] + [thioredoxin]-disulfide + H2O = L-methionyl-(S)-S-oxide-[protein] + [thioredoxin]-dithiol. It carries out the reaction [thioredoxin]-disulfide + L-methionine + H2O = L-methionine (S)-S-oxide + [thioredoxin]-dithiol. Has an important function as a repair enzyme for proteins that have been inactivated by oxidation. Catalyzes the reversible oxidation-reduction of methionine sulfoxide in proteins to methionine. The chain is Peptide methionine sulfoxide reductase MsrA from Halalkalibacterium halodurans (strain ATCC BAA-125 / DSM 18197 / FERM 7344 / JCM 9153 / C-125) (Bacillus halodurans).